The sequence spans 124 residues: Large ribosomal subunit protein bL20 (124 aa).

This sequence belongs to the bacterial ribosomal protein bL20 family.

Binds directly to 23S ribosomal RNA and is necessary for the in vitro assembly process of the 50S ribosomal subunit. It is not involved in the protein synthesizing functions of that subunit. The polypeptide is Large ribosomal subunit protein bL20 (Gemmatimonas aurantiaca (strain DSM 14586 / JCM 11422 / NBRC 100505 / T-27)).